We begin with the raw amino-acid sequence, 670 residues long: DNA ligase (670 aa).

NAD(+)-binding positions include 32-36 (DAEYD), 81-82 (SL), and E110. The active-site N6-AMP-lysine intermediate is the K112. Positions 133, 170, 289, and 313 each coordinate NAD(+). Residues C407, C410, C425, and C431 each coordinate Zn(2+). One can recognise a BRCT domain in the interval 590 to 670 (ESQLSLKGQT…ALMDLLNAAN (81 aa)).

Belongs to the NAD-dependent DNA ligase family. LigA subfamily. The cofactor is Mg(2+). Requires Mn(2+) as cofactor.

It carries out the reaction NAD(+) + (deoxyribonucleotide)n-3'-hydroxyl + 5'-phospho-(deoxyribonucleotide)m = (deoxyribonucleotide)n+m + AMP + beta-nicotinamide D-nucleotide.. Its function is as follows. DNA ligase that catalyzes the formation of phosphodiester linkages between 5'-phosphoryl and 3'-hydroxyl groups in double-stranded DNA using NAD as a coenzyme and as the energy source for the reaction. It is essential for DNA replication and repair of damaged DNA. The chain is DNA ligase from Shewanella frigidimarina (strain NCIMB 400).